A 521-amino-acid chain; its full sequence is Lymphocyte activation gene 3 protein (521 aa).

The N-terminal stretch at 1-23 (MREDLLLGFLLLGLLWEAPVVSS) is a signal peptide. At 24 to 442 (GPGKELPVVW…ISGDLKGGHL (419 aa)) the chain is on the extracellular side. Residues 37–163 (GAPVHLPCSL…LSCSLRLRVG (127 aa)) enclose the Ig-like V-type domain. The segment at 37-246 (GAPVHLPCSL…LTYRDGFNVS (210 aa)) is interaction with FGL1. A disulfide bridge connects residues C44 and C156. 3 Ig-like C2-type domains span residues 165–246 (ASMI…FNVS), 258–341 (PVAP…ATVT), and 345–412 (ITVT…EGQR). An N-linked (GlcNAc...) asparagine glycan is attached at N184. C185 and C235 are oxidised to a cystine. N-linked (GlcNAc...) asparagine glycosylation is found at N244, N309, N337, and N381. A disulfide bridge connects residues C276 and C327. Residues C363 and C405 are joined by a disulfide bond. The interval 422–442 (ESSSGAHSARRISGDLKGGHL) is connecting peptide. Residues 443–463 (VLVLILGALSLFLLVAGAFGF) traverse the membrane as a helical segment. Residues 464-521 (HWWRKQLLLRRFSALEHGIQPFPAQRKIEELERELETEMGQEPEPEPEPQLEPEPRQL) are Cytoplasmic-facing. Residues 490-495 (KIEELE) carry the KIEELE motif motif. The segment at 493–518 (ELERELETEMGQEPEPEPEPQLEPEP) is 13 X 2 AA tandem repeats of E-X. Residues 493–521 (ELERELETEMGQEPEPEPEPQLEPEPRQL) form a disordered region. Acidic residues predominate over residues 500 to 514 (TEMGQEPEPEPEPQL).

It belongs to the LAG3 family. In terms of assembly, interacts with MHC class II (MHC-II); selectively recognizes stable complexes of peptide and MHC-II. Interacts with FGL1 (via the Fibrinogen C-terminal domain). Post-translationally, proteolytically cleaved by ADAM10 and ADAM17 within the connecting peptide region, leading to release of Secreted lymphocyte activation gene 3 protein (sLAG-3). ADAM10 mediates constitutive cleavage, but cleavage increases following T-cell activation, whereas shedding by ADAM17 is induced by TCR signaling in a PRKCQ-dependent manner. In terms of tissue distribution, primarily expressed in activated CD4(+) and CD8(+) T-cells. Also expressed in a subset of regulatory T-cells (Tregs), such as natural CD4(+)CD25(+) Tregs. Also expressed on plasmacytoid dendritic cells (pDCs).

It is found in the cell membrane. Its subcellular location is the secreted. Functionally, lymphocyte activation gene 3 protein: Inhibitory receptor on antigen activated T-cells. Delivers inhibitory signals upon binding to ligands, such as FGL1. FGL1 constitutes a major ligand of LAG3 and is responsible for LAG3 T-cell inhibitory function. Following TCR engagement, LAG3 associates with CD3-TCR in the immunological synapse and directly inhibits T-cell activation. May inhibit antigen-specific T-cell activation in synergy with PDCD1/PD-1, possibly by acting as a coreceptor for PDCD1/PD-1. Negatively regulates the proliferation, activation, effector function and homeostasis of both CD8(+) and CD4(+) T-cells. Also mediates immune tolerance: constitutively expressed on a subset of regulatory T-cells (Tregs) and contributes to their suppressive function. Also acts as a negative regulator of plasmacytoid dendritic cell (pDCs) activation. Binds MHC class II (MHC-II); the precise role of MHC-II-binding is however unclear. May function as a ligand for MHC class II (MHC-II) on antigen-presenting cells (APC), promoting APC activation/maturation and driving Th1 immune response. The protein is Lymphocyte activation gene 3 protein of Mus musculus (Mouse).